We begin with the raw amino-acid sequence, 92 residues long: Small cysteine and glycine repeat-containing protein 9 (92 aa).

The tract at residues 4–72 (CGCGSCGCSG…CCRRTCSSCG (69 aa)) is 11 X 2 AA repeats of CG.

Belongs to the KRTAP type 28 family.

In terms of biological role, in the hair cortex, hair keratin intermediate filaments are embedded in an interfilamentous matrix, consisting of hair keratin-associated proteins (KRTAP), which are essential for the formation of a rigid and resistant hair shaft through their extensive disulfide bond cross-linking with abundant cysteine residues of hair keratins. The matrix proteins include the high-sulfur and high-glycine-tyrosine keratins. This chain is Small cysteine and glycine repeat-containing protein 9, found in Homo sapiens (Human).